Reading from the N-terminus, the 861-residue chain is Xylan 1,4-beta-xylosidase (861 aa).

Positions 1 to 19 (MKYQLFLSLALCVGLGASA) are cleaved as a signal peptide. The active-site Nucleophile is the D269. The 143-residue stretch at 458 to 600 (DGKKGLKGTF…DYQETIAQLK (143 aa)) folds into the PA14 domain. E616 acts as the Proton donor/acceptor in catalysis.

Belongs to the glycosyl hydrolase 3 family. In terms of assembly, exists as a large polymeric species, presumably as a homononamer.

It carries out the reaction Hydrolysis of (1-&gt;4)-beta-D-xylans, to remove successive D-xylose residues from the non-reducing termini.. The catalysed reaction is Hydrolysis of terminal non-reducing alpha-L-arabinofuranoside residues in alpha-L-arabinosides.. The protein operates within glycan degradation; xylan degradation. Involved in degradation of plant cell wall polysaccharides. Has beta-xylosidase activity via its capacity to hydrolyze glycosidic linkages of beta-1,4-xylo-oligosaccharides of various lengths (X2 to X6), releasing xylose monomers. To a much lesser extent, also has alpha-L-arabinofuranosidase activity. Does not possess beta-D-glucosidase activity. Acts synergistically with Xyn10D-Fae1A to increase the release of xylose from xylan. This is Xylan 1,4-beta-xylosidase from Xylanibacter ruminicola (strain ATCC 19189 / DSM 19721 / CIP 105475 / JCM 8958 / 23) (Prevotella ruminicola).